The chain runs to 87 residues: HssA/B-like protein 54 (87 aa).

The protein belongs to the hssA/B family.

The chain is HssA/B-like protein 54 (hssl54) from Dictyostelium discoideum (Social amoeba).